A 334-amino-acid chain; its full sequence is Protein-methionine-sulfoxide reductase catalytic subunit MsrP (334 aa).

The segment at residues 1–44 is a signal peptide (tat-type signal); sequence MKKNQFLKESDVTAESVFFMKRRQVLKALGISAAALSLPHAAHA. Residues Asn88, 91 to 92, Cys146, Thr181, Asn233, Arg238, and 249 to 251 each bind Mo-molybdopterin; these read YE and GIK.

Belongs to the MsrP family. As to quaternary structure, heterodimer of a catalytic subunit (MsrP) and a heme-binding subunit (MsrQ). Mo-molybdopterin is required as a cofactor. Post-translationally, predicted to be exported by the Tat system. The position of the signal peptide cleavage has not been experimentally proven.

The protein localises to the periplasm. It carries out the reaction L-methionyl-[protein] + a quinone + H2O = L-methionyl-(S)-S-oxide-[protein] + a quinol. The enzyme catalyses L-methionyl-[protein] + a quinone + H2O = L-methionyl-(R)-S-oxide-[protein] + a quinol. Its function is as follows. Part of the MsrPQ system that repairs oxidized periplasmic proteins containing methionine sulfoxide residues (Met-O), using respiratory chain electrons. Thus protects these proteins from oxidative-stress damage caused by reactive species of oxygen and chlorine generated by the host defense mechanisms. MsrPQ is essential for the maintenance of envelope integrity under bleach stress, rescuing a wide series of structurally unrelated periplasmic proteins from methionine oxidation, including the primary periplasmic chaperone SurA and the lipoprotein Pal. The catalytic subunit MsrP is non-stereospecific, being able to reduce both (R-) and (S-) diastereoisomers of methionine sulfoxide. In Escherichia coli O157:H7, this protein is Protein-methionine-sulfoxide reductase catalytic subunit MsrP.